Here is a 300-residue protein sequence, read N- to C-terminus: Ribosomal RNA small subunit methyltransferase A (300 aa).

Positions 36, 38, 63, 84, 113, and 131 each coordinate S-adenosyl-L-methionine.

Belongs to the class I-like SAM-binding methyltransferase superfamily. rRNA adenine N(6)-methyltransferase family. RsmA subfamily.

The protein resides in the cytoplasm. It carries out the reaction adenosine(1518)/adenosine(1519) in 16S rRNA + 4 S-adenosyl-L-methionine = N(6)-dimethyladenosine(1518)/N(6)-dimethyladenosine(1519) in 16S rRNA + 4 S-adenosyl-L-homocysteine + 4 H(+). Functionally, specifically dimethylates two adjacent adenosines (A1518 and A1519) in the loop of a conserved hairpin near the 3'-end of 16S rRNA in the 30S particle. May play a critical role in biogenesis of 30S subunits. In Kineococcus radiotolerans (strain ATCC BAA-149 / DSM 14245 / SRS30216), this protein is Ribosomal RNA small subunit methyltransferase A.